Reading from the N-terminus, the 287-residue chain is Serine/arginine-rich SC35-like splicing factor SCL33 (287 aa).

The segment at 1–34 (MRGRSYTPSPPRGYGRRGRSPSPRGRYGGRSRDL) is disordered. Residues Ser-9 and Ser-20 each carry the phosphoserine modification. Positions 36–114 (TSLLVRNLRH…RELTVVFAEE (79 aa)) constitute an RRM domain. Over residues 116 to 132 (RKKPTEMRARERGGGRF) the composition is skewed to basic and acidic residues. Residues 116-287 (RKKPTEMRAR…QYDEDRSPSQ (172 aa)) form a disordered region. Ser-165, Ser-175, Ser-177, Ser-188, and Ser-190 each carry phosphoserine. Basic and acidic residues predominate over residues 177-187 (SPREERYDGRR). Positions 220–237 (SISRSPRRSRSPSPKRNR) are enriched in basic residues. 5 positions are modified to phosphoserine: Ser-238, Ser-248, Ser-271, Ser-284, and Ser-286. Residues 244–260 (SISRSPRRSRSPRRSRR) show a composition bias toward basic residues. The span at 278 to 287 (QYDEDRSPSQ) shows a compositional bias: basic and acidic residues.

The protein belongs to the splicing factor SR family. SCL subfamily. Component of the spliceosome. Homodimer. Interacts with AFC2, CYP59, RS2Z33, RNU1 and SR45. The interaction with AFC2 depends on phosphorylation status. Phosphorylated by AFC2. Ubiquitous. Mostly expressed in roots, fruits and flowers, and, to a lower extent, in leaves.

Its subcellular location is the nucleus speckle. It localises to the nucleus. The protein resides in the nucleoplasm. It is found in the cytoplasm. Functionally, involved in intron recognition and spliceosome assembly. Binds to multiple 5'-GAAG-3' repeats found in its third intron, suggesting autoregulation of alternative splicing. May be necessary for accurate splicing of the 3' region of introns. The chain is Serine/arginine-rich SC35-like splicing factor SCL33 (SCL33) from Arabidopsis thaliana (Mouse-ear cress).